The sequence spans 188 residues: Small acidic protein (188 aa).

The tract at residues 1-188 is disordered; sequence MSAREERYQR…KMLFVKSTGS (188 aa). Over residues 49-82 the composition is skewed to basic and acidic residues; sequence GKKEHTGRLVIGDHKSTSHFRSGVEDKKISDQLE. Polar residues predominate over residues 83-95; the sequence is HQYQQSMDSSMSG. The span at 130–152 shows a compositional bias: acidic residues; it reads SESSNEVSSEEESESESVSEEET. A compositionally biased stretch (basic and acidic residues) spans 153–176; it reads AADKQKPTKPNEKDSFPDSRDGKS.

This sequence belongs to the SMAP family.

This Xenopus laevis (African clawed frog) protein is Small acidic protein (smap).